A 260-amino-acid polypeptide reads, in one-letter code: Serine hydroxymethyltransferase (260 aa).

Lysine 60 carries the N6-(pyridoxal phosphate)lysine modification.

The protein belongs to the SHMT family. As to quaternary structure, homodimer. Pyridoxal 5'-phosphate serves as cofactor.

It localises to the cytoplasm. The catalysed reaction is (6R)-5,10-methylene-5,6,7,8-tetrahydrofolate + glycine + H2O = (6S)-5,6,7,8-tetrahydrofolate + L-serine. Its pathway is one-carbon metabolism; tetrahydrofolate interconversion. It participates in amino-acid biosynthesis; glycine biosynthesis; glycine from L-serine: step 1/1. Its function is as follows. Catalyzes the reversible interconversion of serine and glycine with tetrahydrofolate (THF) serving as the one-carbon carrier. This reaction serves as the major source of one-carbon groups required for the biosynthesis of purines, thymidylate, methionine, and other important biomolecules. Also exhibits THF-independent aldolase activity toward beta-hydroxyamino acids, producing glycine and aldehydes, via a retro-aldol mechanism. In Corynebacterium sp. (strain P-1), this protein is Serine hydroxymethyltransferase.